A 125-amino-acid chain; its full sequence is MPRPMKWRKVCCLPESNRFGPLDLNAGDQNQVKMTVDEYETIRLIDLEGFTQEECAKKMNVARTTVQGIYIEARKKLAESLVNGKVLQIEGGEYRLCDGLGNGCGQGCYKRRRRMGCSGKEEGED.

It belongs to the UPF0251 family.

This Desulfitobacterium hafniense (strain Y51) protein is UPF0251 protein DSY3441.